The sequence spans 1806 residues: Atrochrysone carboxylic acid synthase (1806 aa).

An N-terminal acylcarrier protein transacylase domain (SAT) region spans residues 30–283; that stretch reads DLQGLFRRLY…SLPVYSGLCH (254 aa). The Ketosynthase family 3 (KS3) domain occupies 416–850; the sequence is QSKIAIIGMS…GGNTTVCLEE (435 aa). Catalysis depends on for beta-ketoacyl synthase activity residues Cys-589, His-725, and His-768. The malonyl-CoA:ACP transacylase (MAT) domain stretch occupies residues 951–1270; the sequence is FAFTGQGASY…SLTALHCAGV (320 aa). The segment at 1340–1659 is product template (PT) domain; that stretch reads TSTVQQIIEE…RILLNRFFTA (320 aa). Positions 1344 to 1479 are N-terminal hotdog fold; the sequence is QQIIEESFNG…ASILYDDAAL (136 aa). In terms of domain architecture, PKS/mFAS DH spans 1344-1654; sequence QQIIEESFNG…FRRYPRILLN (311 aa). His-1376 functions as the Proton acceptor; for dehydratase activity in the catalytic mechanism. Positions 1506–1654 are C-terminal hotdog fold; it reads IANRFTRNMA…FRRYPRILLN (149 aa). Catalysis depends on Asp-1565, which acts as the Proton donor; for dehydratase activity. The interval 1668 to 1726 is disordered; that stretch reads HAAASSTPAPRTKPEPVPVATPATAAAPVAQSPAAPASVTPAPAPAPAPGPTPAAAPAA. Residues 1685–1708 show a composition bias toward low complexity; sequence PVATPATAAAPVAQSPAAPASVTP. The span at 1709-1721 shows a compositional bias: pro residues; that stretch reads APAPAPAPGPTPA. The Carrier domain maps to 1728–1805; it reads GESDSVAAKA…DLRSWLLEYY (78 aa). Residue Ser-1765 is modified to O-(pantetheine 4'-phosphoryl)serine.

The enzyme catalyses holo-[ACP] + 8 malonyl-CoA + 8 H(+) = atrochrysone carboxyl-[ACP] + 8 CO2 + 8 CoA + 2 H2O. It participates in secondary metabolite biosynthesis. Functionally, atrochrysone carboxylic acid synthase; part of the gene cluster that mediates the biosynthesis of monodictyphenone, a prenyl xanthone derivative. The pathway begins with the synthesis of atrochrysone thioester by the polyketide synthase (PKS) mdpG. The atrochrysone carboxyl ACP thioesterase mdpF then breaks the thioester bond and releases the atrochrysone carboxylic acid from mdpG. The atrochrysone carboxylic acid is then converted to atrochrysone which is further transformed into emodin anthrone. The next step is performed by the anthrone oxygenase mdpH that catalyzes the oxidation of emodinanthrone to emodin. Emodin is further modified to yield monodictyphenone via several steps involving mdpB, mdpC mdpJ, mdpK and mdpL. The short chain dehydrogenase mdpC converts the tautomers of emodin hydroquinone into the 3-hydroxy-3,4-dihydroan-thracen-1(2H)-one derivative. These enzymes with xptA, xptB and xptC are also proposed to be involved in the synthesis of shamixanthone from emodin. Especially, direct reduction of emodin by the short chain dehydrogenase mdpC followed by dehydration catalyzed by the scytalone dehydratase-like protein mdpB gives loss of oxygen and formation of chrysophanol intermediate in two simple steps. The polypeptide is Atrochrysone carboxylic acid synthase (Emericella nidulans (strain FGSC A4 / ATCC 38163 / CBS 112.46 / NRRL 194 / M139) (Aspergillus nidulans)).